The primary structure comprises 353 residues: D-alanine--D-alanine ligase A (353 aa).

The ATP-grasp domain maps to 141 to 346; sequence KRLVNEAGLS…YPEIINRLVA (206 aa). 169 to 224 lines the ATP pocket; sequence EQALGLPIFIKPARQGSSVGVHKVVTEADYQAAMSDGFTYDDKLLAEEFIQAREVE. Mg(2+) is bound by residues aspartate 300, glutamate 313, and asparagine 315.

The protein belongs to the D-alanine--D-alanine ligase family. The cofactor is Mg(2+). Requires Mn(2+) as cofactor.

The protein resides in the cytoplasm. It catalyses the reaction 2 D-alanine + ATP = D-alanyl-D-alanine + ADP + phosphate + H(+). Its pathway is cell wall biogenesis; peptidoglycan biosynthesis. Its function is as follows. Cell wall formation. The sequence is that of D-alanine--D-alanine ligase A from Brucella suis biovar 1 (strain 1330).